A 931-amino-acid polypeptide reads, in one-letter code: Semaphorin-6C (931 aa).

Positions 1-25 (MPRAPHSMPLLLLLLLLSSLPQAQA) are cleaved as a signal peptide. The Extracellular portion of the chain corresponds to 26–605 (AFPQDPTPLL…ASASRSIPIP (580 aa)). The region spanning 31 to 517 (PTPLLTSDLQ…FPGCIVYLSL (487 aa)) is the Sema domain. Residue Asn-71 is glycosylated (N-linked (GlcNAc...) asparagine). Disulfide bonds link Cys-112–Cys-122, Cys-140–Cys-149, Cys-263–Cys-374, and Cys-288–Cys-333. An N-linked (GlcNAc...) asparagine glycan is attached at Asn-287. An N-linked (GlcNAc...) asparagine glycan is attached at Asn-438. Cystine bridges form between Cys-480-Cys-511, Cys-520-Cys-538, Cys-526-Cys-571, and Cys-530-Cys-546. The segment at 556–591 (DVDLTGNQESTEHGDCQDGATGSQSGPGDSAYGVRR) is disordered. A helical membrane pass occupies residues 606 to 626 (LLLACVAAAFALGASVSGLLV). The Cytoplasmic portion of the chain corresponds to 627-931 (SCACRRANRR…PAPHGGHFNF (305 aa)). 2 disordered regions span residues 655 to 747 (LARL…GGPA) and 777 to 931 (HGPQ…HFNF). Residues 693-708 (PPELACLPTPETTPEL) are compositionally biased toward low complexity. A compositionally biased stretch (basic and acidic residues) spans 893-906 (PEGHRGRSLKRVDV). Pro residues predominate over residues 911–923 (SPKPPLASPPQPA).

The protein belongs to the semaphorin family.

The protein resides in the cell membrane. Its function is as follows. May be a stop signal for the dorsal root ganglion neurons in their target areas, and possibly also for other neurons. May also be involved in the maintenance and remodeling of neuronal connections. This is Semaphorin-6C (Sema6c) from Mus musculus (Mouse).